The chain runs to 286 residues: Meiotically up-regulated gene 64 protein (286 aa).

It is found in the cytoplasm. Its function is as follows. Has a role in meiosis. This Schizosaccharomyces pombe (strain 972 / ATCC 24843) (Fission yeast) protein is Meiotically up-regulated gene 64 protein (mug64).